The following is a 590-amino-acid chain: MPVVTIHYDKLVKILGREVSFEELAHNLIPMLGSDVERIDEREMVIETEFFPNRPDLYSVEGVARALKGFLGIETGIPEYNVRRSDVEARVEESVLDARPCLAVAVVRGVEFEDERDLEHLMEFQEHLHWVIGRDRKKAAIGIHDFEAVEPPLRYFLADPNDRSWAFEPLDHPGEEMTPAEVLRRHEKGRQYAHLVSDGAPILADEEGVISFPPVINSERTRVTQDTTDLLIDVTGTDWRSVLDALHVIVCNLAERGAEILTVEILGAYERTTPTMELDVWDVPVSEARKLLGIDLSGEQLEELLERARHGAIFVPEGERELREYPLPDVYHIEADWREIPPILYEEDVVRVFVGPRRTNILHEWDLIEDAGIMYNYDRFEPTVPDFYTPSRADREREFINVVRDTLARMKFVEVNSLTLISPEENYRKMRLEPDGRAVKLANPIQKEYTIVRTWILPSLMRFLADNKHRPYPQRVFELGEVIERDEDAETGAKDRWKLALAIAGPGVGFSEIKSVVEALLRELDVTGWEITERKHRSFINGRCAAVLADGRELGFFGEIHPEVLTEFDLEVPVVGGEFDVAALRTAAGW.

Residues 276–382 (MELDVWDVPV…IMYNYDRFEP (107 aa)) enclose the B5 domain. Residues asparagine 360, aspartate 366, glutamate 369, and aspartate 370 each contribute to the Mg(2+) site.

The protein belongs to the phenylalanyl-tRNA synthetase beta subunit family. Type 2 subfamily. In terms of assembly, tetramer of two alpha and two beta subunits. Requires Mg(2+) as cofactor.

It is found in the cytoplasm. It carries out the reaction tRNA(Phe) + L-phenylalanine + ATP = L-phenylalanyl-tRNA(Phe) + AMP + diphosphate + H(+). This is Phenylalanine--tRNA ligase beta subunit from Methanopyrus kandleri (strain AV19 / DSM 6324 / JCM 9639 / NBRC 100938).